Reading from the N-terminus, the 334-residue chain is Leukocyte cell-derived chemotaxin 1 (334 aa).

Residues 45–65 (VVLISGAVLLLFGAIGAFYFW) form a helical membrane-spanning segment. Positions 104–201 (GSGAEEAIAV…LCGDLPIFWL (98 aa)) constitute a BRICHOS domain. Residues cysteine 131 and cysteine 193 are joined by a disulfide bond. The propeptide occupies 211 to 214 (RERR). The disordered stretch occupies residues 218-268 (RKIVPTTTKRPHSGPRSNPGAGRLNNETRPSVQEDSQAFNPDNPYHQQEGE). Polar residues predominate over residues 242–257 (NNETRPSVQEDSQAFN). Residue asparagine 243 is glycosylated (N-linked (GlcNAc...) asparagine). Intrachain disulfides connect cysteine 282–cysteine 286, cysteine 283–cysteine 323, cysteine 293–cysteine 317, and cysteine 297–cysteine 313.

Belongs to the chondromodulin-1 family. Post-translationally, after cleavage, the post-translationally modified ChM-I is secreted as a glycoprotein. In terms of tissue distribution, detected in cartilage and cardiac valves (at protein level). Detected in the laminae fibrosa, spongiosa and ventricularis layers of normal cardiac valves (at protein level). Expression is decreased cardiac valves of patients with valvular heart disease (at protein level). Weakly expressed in chondrosarcoma.

The protein resides in the secreted. It is found in the extracellular space. The protein localises to the extracellular matrix. Its subcellular location is the endomembrane system. Functionally, bifunctional growth regulator that stimulates the growth of cultured chondrocytes in the presence of basic fibroblast growth factor (FGF) but inhibits the growth of cultured vascular endothelial cells. May contribute to the rapid growth of cartilage and vascular invasion prior to the replacement of cartilage by bone during endochondral bone development. Inhibits in vitro tube formation and mobilization of endothelial cells. Plays a role as antiangiogenic factor in cardiac valves to suppress neovascularization. The protein is Leukocyte cell-derived chemotaxin 1 of Homo sapiens (Human).